Reading from the N-terminus, the 242-residue chain is Myogenic factor 6 (242 aa).

A disordered region spans residues 31 to 63 (SPLYPGSDGTLSPCQDQMPPEAGSDSSGEEHVL). The bHLH domain maps to 93-144 (DRRKAATLRERRRLKKINEAFEALKRRTVANPNQRLPKVEILRSAINYIERL).

In terms of assembly, efficient DNA binding requires dimerization with another bHLH protein. Interacts with CSRP3.

The protein resides in the nucleus. Involved in muscle differentiation (myogenic factor). Induces fibroblasts to differentiate into myoblasts. Probable sequence specific DNA-binding protein. The polypeptide is Myogenic factor 6 (MYF6) (Bos taurus (Bovine)).